The primary structure comprises 400 residues: CinA-like protein (400 aa).

The protein belongs to the CinA family.

The protein is CinA-like protein of Escherichia coli (strain 55989 / EAEC).